Here is a 227-residue protein sequence, read N- to C-terminus: Neuromodulin (227 aa).

The segment at 1–227 (MLCCMRRTKQ…EDPEADQEHA (227 aa)) is disordered. Residues C3 and C4 are each lipidated (S-palmitoyl cysteine). A compositionally biased stretch (basic and acidic residues) spans 9–32 (KQVEKNDEDQKIEQDGVKPEDKAH). The region spanning 31 to 60 (AHKAATKIQASFRGHITRKKLKGEKKGDAP) is the IQ domain. S41 is subject to Phosphoserine; by PHK. Basic and acidic residues predominate over residues 54-84 (EKKGDAPAAEAEAKEKDDAPVADGVEKKEGD). Low complexity predominate over residues 85 to 97 (GSATTDAAPATSP). A phosphoserine mark is found at S86 and S96. Residues 98–127 (KAEEPSKAGDAPSEEKKGEGDAAPSEEKAG) are compositionally biased toward basic and acidic residues. Residues 128–139 (SAETESAAKATT) show a composition bias toward low complexity. The residue at position 138 (T138) is a Phosphothreonine. Phosphoserine is present on residues S142, S144, and S145. Basic and acidic residues predominate over residues 146 to 158 (KAEDGPAKEEPKQ). Over residues 159–193 (ADVPAAVTDAAATTPAAEDAATKAAQPPTETAESS) the composition is skewed to low complexity. T172 is modified (phosphothreonine). Residues S192 and S193 each carry the phosphoserine; by CK2 modification. A compositionally biased stretch (basic and acidic residues) spans 202-215 (VDEAKPKESARQDE). The segment covering 216-227 (GKEDPEADQEHA) has biased composition (acidic residues).

This sequence belongs to the neuromodulin family. Identified in a complex containing FGFR4, NCAM1, CDH2, PLCG1, FRS2, SRC, SHC1, GAP43 and CTTN. Interacts (via IQ domain) with calmodulin. Binds calmodulin with a greater affinity in the absence of Ca(2+) than in its presence. Phosphorylated. Phosphorylation of this protein by a protein kinase C is specifically correlated with certain forms of synaptic plasticity. Post-translationally, palmitoylated by ZDHHC3. Palmitoylation is regulated by ARF6 and is essential for plasma membrane association and axonal and dendritic filopodia induction. Deacylated by LYPLA2. As to expression, expressed in the hippocampus (at protein level). Expressed in the dorsal root ganglion and the spinal cord (at protein level).

The protein resides in the cell membrane. The protein localises to the cell projection. It is found in the growth cone membrane. It localises to the synapse. Its subcellular location is the filopodium membrane. The protein resides in the perikaryon. The protein localises to the dendrite. It is found in the axon. It localises to the cytoplasm. Functionally, this protein is associated with nerve growth. It is a major component of the motile 'growth cones' that form the tips of elongating axons. Plays a role in axonal and dendritic filopodia induction. The polypeptide is Neuromodulin (Gap43) (Mus musculus (Mouse)).